The following is a 346-amino-acid chain: Fe(3+) ions import ATP-binding protein FbpC 2 (346 aa).

Residues 5 to 235 (LEVDGVDKSF…PVDVPTAEFI (231 aa)) form the ABC transporter domain. 37–44 (GPSGCGKT) serves as a coordination point for ATP.

It belongs to the ABC transporter superfamily. Fe(3+) ion importer (TC 3.A.1.10) family. As to quaternary structure, the complex is composed of two ATP-binding proteins (FbpC), two transmembrane proteins (FbpB) and a solute-binding protein (FbpA).

It is found in the cell membrane. The enzyme catalyses Fe(3+)(out) + ATP + H2O = Fe(3+)(in) + ADP + phosphate + H(+). Part of the ABC transporter complex FbpABC involved in Fe(3+) ions import. Responsible for energy coupling to the transport system. The polypeptide is Fe(3+) ions import ATP-binding protein FbpC 2 (Rhodococcus jostii (strain RHA1)).